Reading from the N-terminus, the 927-residue chain is DNA mismatch repair protein MutS (927 aa).

646-653 (GPNMAGKS) lines the ATP pocket. Residues 904–927 (SAQPGSAEQGESPDKHDEGKNSRG) are disordered. The segment covering 915-927 (SPDKHDEGKNSRG) has biased composition (basic and acidic residues).

It belongs to the DNA mismatch repair MutS family.

In terms of biological role, this protein is involved in the repair of mismatches in DNA. It is possible that it carries out the mismatch recognition step. This protein has a weak ATPase activity. This is DNA mismatch repair protein MutS from Desulfovibrio desulfuricans (strain ATCC 27774 / DSM 6949 / MB).